We begin with the raw amino-acid sequence, 519 residues long: tRNA-2-methylthio-N(6)-dimethylallyladenosine synthase (519 aa).

Residues 1-23 (MNEQQRKQQSQIRTEQANVDRIK) are disordered. A compositionally biased stretch (polar residues) spans 7–17 (KQQSQIRTEQA). An MTTase N-terminal domain is found at 76–194 (KKFLIRTYGC…LPHLVKEALF (119 aa)). Positions 85, 121, 155, 231, 235, and 238 each coordinate [4Fe-4S] cluster. The Radical SAM core domain occupies 217 to 450 (RKGKIKAWVN…VNKQSAASMK (234 aa)). The region spanning 450–513 (KDYAGKKVKV…TWSLNGVMVE (64 aa)) is the TRAM domain.

The protein belongs to the methylthiotransferase family. MiaB subfamily. In terms of assembly, monomer. Requires [4Fe-4S] cluster as cofactor.

It is found in the cytoplasm. The catalysed reaction is N(6)-dimethylallyladenosine(37) in tRNA + (sulfur carrier)-SH + AH2 + 2 S-adenosyl-L-methionine = 2-methylsulfanyl-N(6)-dimethylallyladenosine(37) in tRNA + (sulfur carrier)-H + 5'-deoxyadenosine + L-methionine + A + S-adenosyl-L-homocysteine + 2 H(+). In terms of biological role, catalyzes the methylthiolation of N6-(dimethylallyl)adenosine (i(6)A), leading to the formation of 2-methylthio-N6-(dimethylallyl)adenosine (ms(2)i(6)A) at position 37 in tRNAs that read codons beginning with uridine. The polypeptide is tRNA-2-methylthio-N(6)-dimethylallyladenosine synthase (Oceanobacillus iheyensis (strain DSM 14371 / CIP 107618 / JCM 11309 / KCTC 3954 / HTE831)).